Here is a 308-residue protein sequence, read N- to C-terminus: Oxygen-dependent coproporphyrinogen-III oxidase (308 aa).

Ser100 contributes to the substrate binding site. Positions 104 and 114 each coordinate a divalent metal cation. His114 functions as the Proton donor in the catalytic mechanism. Substrate is bound at residue 116–118 (NFR). A divalent metal cation is bound by residues His153 and His183. Residues 248–283 (YVEFNLVFDRGTIFGLQSGGRTESILSSMPPIATWK) are important for dimerization. 266–268 (GGR) is a binding site for substrate.

The protein belongs to the aerobic coproporphyrinogen-III oxidase family. In terms of assembly, homodimer. It depends on a divalent metal cation as a cofactor.

It localises to the cytoplasm. The enzyme catalyses coproporphyrinogen III + O2 + 2 H(+) = protoporphyrinogen IX + 2 CO2 + 2 H2O. The protein operates within porphyrin-containing compound metabolism; protoporphyrin-IX biosynthesis; protoporphyrinogen-IX from coproporphyrinogen-III (O2 route): step 1/1. Its function is as follows. Involved in the heme biosynthesis. Catalyzes the aerobic oxidative decarboxylation of propionate groups of rings A and B of coproporphyrinogen-III to yield the vinyl groups in protoporphyrinogen-IX. This chain is Oxygen-dependent coproporphyrinogen-III oxidase, found in Francisella tularensis subsp. tularensis (strain FSC 198).